Here is a 317-residue protein sequence, read N- to C-terminus: Aquaporin-2 (317 aa).

The Cytoplasmic portion of the chain corresponds to 1 to 75; sequence MSLRDDLTIN…RSQEFKMQHR (75 aa). The chain crosses the membrane as a helical span at residues 76-96; it reads EFLAEFIGTLILVLLTCGFCA. The Extracellular segment spans residues 97–108; sequence EQTLNIEKSKSW. Residues 109–129 traverse the membrane as a helical segment; that stretch reads LTSSLGSGLSVLIGICVAGHV. Over 130–154 the chain is Cytoplasmic; that stretch reads SGGHLNPAITIAFWVFSGFPIRKVP. An NPA 1 motif is present at residues 135-137; the sequence is NPA. Residues 155–175 form a helical membrane-spanning segment; the sequence is MYITAQLLGAFSGAALLYSIV. Over 176–208 the chain is Extracellular; it reads EPAISQFDHGKRQILGELGTAGIFGTYPPLYVG. Residues 209-229 traverse the membrane as a helical segment; sequence TGSAVASEVVGTAMLLLVVMV. Over 230 to 242 the chain is Cytoplasmic; the sequence is TGHPNNLPFRTAQ. A helical transmembrane segment spans residues 243-263; the sequence is GAMIALGVTTISLCIGYTSGF. Over 264-295 the chain is Extracellular; it reads SLNPARDFGPRLFTAVAGWGIDVFTVHHYYAL. An NPA 2 motif is present at residues 266-268; that stretch reads NPA. Residues 296 to 316 form a helical membrane-spanning segment; sequence VPMFAPILGGLAGGFIYTVFI. A topological domain (cytoplasmic) is located at residue D317.

Belongs to the MIP/aquaporin (TC 1.A.8) family.

It is found in the cell membrane. It catalyses the reaction H2O(in) = H2O(out). The enzyme catalyses glycerol(in) = glycerol(out). Its function is as follows. Water channel required to facilitate the transport of water across membranes. Contributes to water uptake of spores during the early stages of spore germination. Aquaporins AQP1 and AQP2 act as extracellular pH sensors and enable the spores to hydrate under favorable conditions and to commence germination. Wounded vegetables and fruit present acidic pH, so the optimal pH range for germination is adapted to the relevant host pH. This is Aquaporin-2 from Rhizopus delemar (strain RA 99-880 / ATCC MYA-4621 / FGSC 9543 / NRRL 43880) (Mucormycosis agent).